A 1203-amino-acid polypeptide reads, in one-letter code: Exonuclease/helicase subunit RexA (1203 aa).

The region spanning 4–472 is the UvrD-like helicase ATP-binding domain; that stretch reads VKLTPEQNEA…IRLKENFRSR (469 aa). ATP is bound at residue 25–32; sequence ASAGSGKT. One can recognise a UvrD-like helicase C-terminal domain in the interval 503-785; sequence VQGNISDYPV…RVMTFHKSKG (283 aa).

The protein belongs to the helicase family. AddA subfamily. As to quaternary structure, heterodimer of RexA (AddA) and RexB. It depends on Mg(2+) as a cofactor.

The catalysed reaction is Couples ATP hydrolysis with the unwinding of duplex DNA by translocating in the 3'-5' direction.. It catalyses the reaction ATP + H2O = ADP + phosphate + H(+). Functionally, the heterodimer acts both as an ATP-dependent DNA helicase and an ATP-dependent, dual-direction single-stranded exonuclease. Recognizes the L.lactis chi site (5'-GCGCGTG-3'), which stimulates homologous recombination. The RexA (AddA) nuclease domain is required for chi fragment generation; this subunit has 3'-&gt;5' exonuclease activity and probably also performs the helicase function. The polypeptide is Exonuclease/helicase subunit RexA (Lactococcus lactis subsp. cremoris (strain MG1363)).